We begin with the raw amino-acid sequence, 475 residues long: Ribulose bisphosphate carboxylase large chain (475 aa).

A propeptide spanning residues 1–2 is cleaved from the precursor; that stretch reads MS. An N-acetylproline modification is found at P3. Position 14 is an N6,N6,N6-trimethyllysine (K14). The substrate site is built by N123 and T173. K175 (proton acceptor) is an active-site residue. K177 contributes to the substrate binding site. 3 residues coordinate Mg(2+): K201, D203, and E204. K201 carries the N6-carboxylysine modification. The active-site Proton acceptor is H294. Substrate-binding residues include R295, H327, and S379.

Belongs to the RuBisCO large chain family. Type I subfamily. As to quaternary structure, heterohexadecamer of 8 large chains and 8 small chains; disulfide-linked. The disulfide link is formed within the large subunit homodimers. The cofactor is Mg(2+). The disulfide bond which can form in the large chain dimeric partners within the hexadecamer appears to be associated with oxidative stress and protein turnover.

It is found in the plastid. The protein localises to the chloroplast. It catalyses the reaction 2 (2R)-3-phosphoglycerate + 2 H(+) = D-ribulose 1,5-bisphosphate + CO2 + H2O. It carries out the reaction D-ribulose 1,5-bisphosphate + O2 = 2-phosphoglycolate + (2R)-3-phosphoglycerate + 2 H(+). Its function is as follows. RuBisCO catalyzes two reactions: the carboxylation of D-ribulose 1,5-bisphosphate, the primary event in carbon dioxide fixation, as well as the oxidative fragmentation of the pentose substrate in the photorespiration process. Both reactions occur simultaneously and in competition at the same active site. This is Ribulose bisphosphate carboxylase large chain from Citrus sinensis (Sweet orange).